We begin with the raw amino-acid sequence, 354 residues long: Holliday junction branch migration complex subunit RuvB (354 aa).

A large ATPase domain (RuvB-L) region spans residues 4 to 198; sequence TTDYGASNTG…FGFTAHLDFY (195 aa). ATP is bound by residues L37, R38, G79, K82, T83, T84, 145–147, R188, Y198, and R235; that span reads EDF. A Mg(2+)-binding site is contributed by T83. The tract at residues 199-269 is small ATPAse domain (RuvB-S); that stretch reads PHEELEKLIE…DVKEALALYQ (71 aa). Residues 272-354 form a head domain (RuvB-H) region; the sequence is SEGLDRLDIA…TPKDDVSKLF (83 aa). DNA-binding residues include R327 and R332.

The protein belongs to the RuvB family. Homohexamer. Forms an RuvA(8)-RuvB(12)-Holliday junction (HJ) complex. HJ DNA is sandwiched between 2 RuvA tetramers; dsDNA enters through RuvA and exits via RuvB. An RuvB hexamer assembles on each DNA strand where it exits the tetramer. Each RuvB hexamer is contacted by two RuvA subunits (via domain III) on 2 adjacent RuvB subunits; this complex drives branch migration. In the full resolvosome a probable DNA-RuvA(4)-RuvB(12)-RuvC(2) complex forms which resolves the HJ.

It localises to the cytoplasm. The enzyme catalyses ATP + H2O = ADP + phosphate + H(+). The RuvA-RuvB-RuvC complex processes Holliday junction (HJ) DNA during genetic recombination and DNA repair, while the RuvA-RuvB complex plays an important role in the rescue of blocked DNA replication forks via replication fork reversal (RFR). RuvA specifically binds to HJ cruciform DNA, conferring on it an open structure. The RuvB hexamer acts as an ATP-dependent pump, pulling dsDNA into and through the RuvAB complex. RuvB forms 2 homohexamers on either side of HJ DNA bound by 1 or 2 RuvA tetramers; 4 subunits per hexamer contact DNA at a time. Coordinated motions by a converter formed by DNA-disengaged RuvB subunits stimulates ATP hydrolysis and nucleotide exchange. Immobilization of the converter enables RuvB to convert the ATP-contained energy into a lever motion, pulling 2 nucleotides of DNA out of the RuvA tetramer per ATP hydrolyzed, thus driving DNA branch migration. The RuvB motors rotate together with the DNA substrate, which together with the progressing nucleotide cycle form the mechanistic basis for DNA recombination by continuous HJ branch migration. Branch migration allows RuvC to scan DNA until it finds its consensus sequence, where it cleaves and resolves cruciform DNA. This Bifidobacterium longum (strain NCC 2705) protein is Holliday junction branch migration complex subunit RuvB.